A 491-amino-acid chain; its full sequence is Katanin p60 ATPase-containing subunit A1 (491 aa).

The tract at residues 1 to 29 is interaction with KATNB1; the sequence is MSLLMITENVKLAREYALLGNYDSAMVYY. The tract at residues 1–75 is interaction with dynein and NDEL1; sequence MSLLMITENV…VKEIMKTLES (75 aa). Residues 1 to 185 are interaction with microtubules; that stretch reads MSLLMITENV…EPEANKFDST (185 aa). The residue at position 42 (Ser42) is a Phosphoserine; by DYRK2. The disordered stretch occupies residues 87 to 183; it reads QHELPSSEGE…VTEPEANKFD (97 aa). Positions 145–169 are enriched in basic and acidic residues; the sequence is HSDRGKAVRSREKKEQSKGREEKNK. Residue 249-256 coordinates ATP; it reads GPPGTGKT.

The protein belongs to the AAA ATPase family. Katanin p60 subunit A1 subfamily. In terms of assembly, can homooligomerize into hexameric rings, which may be promoted by interaction with microtubules. Interacts with KATNB1, which may serve as a targeting subunit. Interacts with ASPM; the katanin complex formation KATNA1:KATNB1 is required for the association of ASPM. Interacts with dynein and NDEL1. Associates with the E3 ligase complex containing DYRK2, EDD/UBR5, DDB1 and DCAF1 proteins (EDVP complex). Interacts with KLHL42 (via the kelch domains). Interacts with CUL3; the interaction is enhanced by KLHL42. Interacts with KATNB1 and KATNBL1. Post-translationally, phosphorylation by DYRK2 triggers ubiquitination and subsequent degradation. In terms of processing, ubiquitinated by the BCR(KLHL42) E3 ubiquitin ligase complex, leading to its proteasomal degradation. Ubiquitinated by the EDVP E3 ligase complex and subsequently targeted for proteasomal degradation.

It localises to the cytoplasm. The protein localises to the midbody. The protein resides in the cytoskeleton. It is found in the microtubule organizing center. Its subcellular location is the centrosome. It localises to the spindle pole. The protein localises to the spindle. The enzyme catalyses n ATP + n H2O + a microtubule = n ADP + n phosphate + (n+1) alpha/beta tubulin heterodimers.. Its activity is regulated as follows. ATPase activity is stimulated by microtubules, which promote homooligomerization. ATP-dependent microtubule severing is stimulated by interaction with KATNB1. Catalytic subunit of a complex which severs microtubules in an ATP-dependent manner. Microtubule severing may promote rapid reorganization of cellular microtubule arrays and the release of microtubules from the centrosome following nucleation. Microtubule release from the mitotic spindle poles may allow depolymerization of the microtubule end proximal to the spindle pole, leading to poleward microtubule flux and poleward motion of chromosome. Microtubule release within the cell body of neurons may be required for their transport into neuronal processes by microtubule-dependent motor proteins. This transport is required for axonal growth. The polypeptide is Katanin p60 ATPase-containing subunit A1 (Katna1) (Rattus norvegicus (Rat)).